We begin with the raw amino-acid sequence, 222 residues long: C-reactive protein (222 aa).

Residues 1–19 (MEKLSLCLLVIISLSNAFA) form the signal peptide. Glutamine 20 carries the post-translational modification Pyrrolidone carboxylic acid. A Pentraxin (PTX) domain is found at 24 to 222 (IGKAFVFPKE…EVYVKPQLWP (199 aa)). A disulfide bridge connects residues cysteine 55 and cysteine 113. 5 residues coordinate Ca(2+): asparagine 78, glutamate 154, glutamine 155, aspartate 156, and glutamine 166.

The protein belongs to the pentraxin family. Homopentamer. Pentraxin (or pentaxin) have a discoid arrangement of 5 non-covalently bound subunits. Interacts with FCN1; may regulate monocyte activation by FCN1. It depends on Ca(2+) as a cofactor. In terms of tissue distribution, found in plasma.

It localises to the secreted. Displays several functions associated with host defense: it promotes agglutination, bacterial capsular swelling, phagocytosis and complement fixation through its calcium-dependent binding to phosphorylcholine. Can interact with DNA and histones and may scavenge nuclear material released from damaged circulating cells. The chain is C-reactive protein (CRP) from Sus scrofa (Pig).